Here is a 727-residue protein sequence, read N- to C-terminus: UvrABC system protein C (727 aa).

One can recognise a GIY-YIG domain in the interval V16–V95. The UVR domain occupies D208–A243. Disordered stretches follow at residues D503–R527 and S679–E727. Basic and acidic residues predominate over residues N701 to E711. Residues Q718–E727 show a composition bias toward polar residues.

Belongs to the UvrC family. In terms of assembly, interacts with UvrB in an incision complex.

Its subcellular location is the cytoplasm. Its function is as follows. The UvrABC repair system catalyzes the recognition and processing of DNA lesions. UvrC both incises the 5' and 3' sides of the lesion. The N-terminal half is responsible for the 3' incision and the C-terminal half is responsible for the 5' incision. The polypeptide is UvrABC system protein C (Rhodococcus jostii (strain RHA1)).